A 270-amino-acid chain; its full sequence is Phosphatidylinositol transfer protein alpha isoform (270 aa).

Residues Thr58, Lys60, Glu85, Asn89, Thr96, and Lys194 each coordinate a 1,2-diacyl-sn-glycero-3-phospho-(1D-myo-inositol). Position 215 is an N6-acetyllysine (Lys215). The segment covering 250-263 (TKRQLDEMRQKDPV) has biased composition (basic and acidic residues). Residues 250–270 (TKRQLDEMRQKDPVKGMTADD) form a disordered region.

It belongs to the PtdIns transfer protein family. PI transfer class I subfamily. In terms of processing, phosphorylated by PKC in a calcium and phosphatidylserine-dependent manner.

It localises to the cytoplasm. The protein localises to the nucleus. The catalysed reaction is a 1,2-diacyl-sn-glycero-3-phosphocholine(in) = a 1,2-diacyl-sn-glycero-3-phosphocholine(out). The enzyme catalyses a 1,2-diacyl-sn-glycero-3-phospho-(1D-myo-inositol)(in) = a 1,2-diacyl-sn-glycero-3-phospho-(1D-myo-inositol)(out). Catalyzes the transfer of phosphatidylinositol (PI) and phosphatidylcholine (PC) between membranes. Shows a preference for PI and PC containing shorter saturated or monosaturated acyl chains at the sn-1 and sn-2 positions. Preference order for PC is C16:1 &gt; C16:0 &gt; C18:1 &gt; C18:0 &gt; C20:4 and for PI is C16:1 &gt; C16:0 &gt; C18:1 &gt; C18:0 &gt; C20:4 &gt; C20:3. The polypeptide is Phosphatidylinositol transfer protein alpha isoform (PITPNA) (Oryctolagus cuniculus (Rabbit)).